Reading from the N-terminus, the 293-residue chain is Ribosomal RNA small subunit methyltransferase A (293 aa).

Asn-29, Leu-31, Gly-56, Glu-77, Asp-102, and Asn-127 together coordinate S-adenosyl-L-methionine.

This sequence belongs to the class I-like SAM-binding methyltransferase superfamily. rRNA adenine N(6)-methyltransferase family. RsmA subfamily.

Its subcellular location is the cytoplasm. It carries out the reaction adenosine(1518)/adenosine(1519) in 16S rRNA + 4 S-adenosyl-L-methionine = N(6)-dimethyladenosine(1518)/N(6)-dimethyladenosine(1519) in 16S rRNA + 4 S-adenosyl-L-homocysteine + 4 H(+). In terms of biological role, specifically dimethylates two adjacent adenosines (A1518 and A1519) in the loop of a conserved hairpin near the 3'-end of 16S rRNA in the 30S particle. May play a critical role in biogenesis of 30S subunits. The sequence is that of Ribosomal RNA small subunit methyltransferase A from Lysinibacillus sphaericus (strain C3-41).